The chain runs to 300 residues: tRNA dimethylallyltransferase (300 aa).

11–18 contributes to the ATP binding site; that stretch reads GPTAVGKS. 13-18 serves as a coordination point for substrate; it reads TAVGKS. Positions 35–38 are interaction with substrate tRNA; sequence DSIQ.

The protein belongs to the IPP transferase family. In terms of assembly, monomer. The cofactor is Mg(2+).

The catalysed reaction is adenosine(37) in tRNA + dimethylallyl diphosphate = N(6)-dimethylallyladenosine(37) in tRNA + diphosphate. Functionally, catalyzes the transfer of a dimethylallyl group onto the adenine at position 37 in tRNAs that read codons beginning with uridine, leading to the formation of N6-(dimethylallyl)adenosine (i(6)A). The polypeptide is tRNA dimethylallyltransferase (Borrelia duttonii (strain Ly)).